The chain runs to 260 residues: E3 ubiquitin-protein ligase SRFP1 (260 aa).

The CHY-type zinc-finger motif lies at 11–80; the sequence is FGRMGFGCKH…VAQVCYNCGV (70 aa). Zn(2+) contacts are provided by C18, H20, C31, C32, C38, C41, H42, H50, C62, C65, C75, C78, C87, C90, H103, C104, C107, C110, H120, C121, C124, C127, H136, and C138. The CTCHY-type zinc finger occupies 82–146; the sequence is MGEYFCSACK…CCIENSMKNN (65 aa). Residues 147–190 form an RING-type; atypical zinc finger; sequence CPICYEYLFDSLRETSVLRCGHTMHLQCFHEMLKHDKFSCPICS.

Expressed in roots, leaves, nodes and panicles.

The protein localises to the nucleus. The protein resides in the cytoplasm. The enzyme catalyses S-ubiquitinyl-[E2 ubiquitin-conjugating enzyme]-L-cysteine + [acceptor protein]-L-lysine = [E2 ubiquitin-conjugating enzyme]-L-cysteine + N(6)-ubiquitinyl-[acceptor protein]-L-lysine.. It functions in the pathway protein modification; protein ubiquitination. In terms of biological role, possesses E3 ubiquitin-protein ligase activity in vitro. Possesses transactivation activity in yeast cells. May modulate abiotic stress responses by negatively regulating antioxidant enzymes-mediated reactive oxygen species (ROS) removal. The sequence is that of E3 ubiquitin-protein ligase SRFP1 from Oryza sativa subsp. japonica (Rice).